We begin with the raw amino-acid sequence, 80 residues long: Cell division activator CedA (80 aa).

This sequence belongs to the CedA family.

Functionally, activates the cell division inhibited by chromosomal DNA over-replication. In Escherichia coli O139:H28 (strain E24377A / ETEC), this protein is Cell division activator CedA.